Consider the following 599-residue polypeptide: E3 ubiquitin-protein ligase Kcmf1 (599 aa).

The segment at 4–60 adopts a ZZ-type zinc-finger fold; it reads HEGVSCDSCLKSNFNGRRYKCLICYDYDLCADCYEDGVTSTRHLVEHPMQCILTRSD. 8 residues coordinate Zn(2+): Cys9, Cys12, Cys24, Cys27, Cys33, Cys36, His46, and His50. A C2H2-type zinc finger spans residues 78-101; sequence FTCPYCKKMGFSDATLLEHVSAEH. 5 disordered regions span residues 155–193, 229–253, 269–294, 466–486, and 507–599; these read HGGG…PSGR, DRQQ…VSTS, GSGG…NLRT, VEQQ…VNQM, and NTTQ…PDTR. 2 stretches are compositionally biased toward low complexity: residues 160–170 and 180–192; these read RRIPGRTLGGP and SSSS…SPSG. Over residues 269–285 the composition is skewed to gly residues; that stretch reads GSGGSGAVGSGSGGGSG. Residues 513–532 are compositionally biased toward gly residues; the sequence is GTGGLGGAGATAAPGGGASG. Residues 538 to 547 are compositionally biased toward basic and acidic residues; the sequence is TADRGIERRS. Residues 559–593 show a composition bias toward low complexity; sequence SQQPQQQQQSTANPAASQQKYKQNASAATAAGNTN.

The protein belongs to the KCMF1 family. As to quaternary structure, interacts with poe.

The enzyme catalyses S-ubiquitinyl-[E2 ubiquitin-conjugating enzyme]-L-cysteine + [acceptor protein]-L-lysine = [E2 ubiquitin-conjugating enzyme]-L-cysteine + N(6)-ubiquitinyl-[acceptor protein]-L-lysine.. Its function is as follows. Has intrinsic E3 ubiquitin ligase activity and promotes ubiquitination. Involved in the negative regulation of the Ras/MAPK signaling pathway in the wing by acting with the E2 enzyme Unc6 and the putative E3 ligases poe and Ufd4 to mediate the ubiquitination and proteasomal degradation of rl/MAPK. The chain is E3 ubiquitin-protein ligase Kcmf1 from Drosophila melanogaster (Fruit fly).